The chain runs to 441 residues: tRNA-2-methylthio-N(6)-dimethylallyladenosine synthase (441 aa).

Positions 2–117 (KGLYIKSYGC…LPELLVKAHR (116 aa)) constitute an MTTase N-terminal domain. [4Fe-4S] cluster-binding residues include C11, C47, C80, C157, C161, and C164. Residues 143–374 (KNQETSAFIS…QKLLREQQLA (232 aa)) enclose the Radical SAM core domain.

Belongs to the methylthiotransferase family. MiaB subfamily. In terms of assembly, monomer. Requires [4Fe-4S] cluster as cofactor.

The protein resides in the cytoplasm. It catalyses the reaction N(6)-dimethylallyladenosine(37) in tRNA + (sulfur carrier)-SH + AH2 + 2 S-adenosyl-L-methionine = 2-methylsulfanyl-N(6)-dimethylallyladenosine(37) in tRNA + (sulfur carrier)-H + 5'-deoxyadenosine + L-methionine + A + S-adenosyl-L-homocysteine + 2 H(+). In terms of biological role, catalyzes the methylthiolation of N6-(dimethylallyl)adenosine (i(6)A), leading to the formation of 2-methylthio-N6-(dimethylallyl)adenosine (ms(2)i(6)A) at position 37 in tRNAs that read codons beginning with uridine. The polypeptide is tRNA-2-methylthio-N(6)-dimethylallyladenosine synthase (Ehrlichia canis (strain Jake)).